The sequence spans 236 residues: Ubiquitin carboxyl-terminal hydrolase YUH1 (236 aa).

A UCH catalytic domain is found at alanine 7–proline 233. The interval proline 10–proline 15 is interaction with ubiquitin. Residue cysteine 90 is the Nucleophile of the active site. Residues phenylalanine 149–proline 157 are interaction with ubiquitin. Histidine 166 acts as the Proton donor in catalysis. Residues asparagine 219–methionine 228 form an interaction with ubiquitin region.

It belongs to the peptidase C12 family.

It carries out the reaction Thiol-dependent hydrolysis of ester, thioester, amide, peptide and isopeptide bonds formed by the C-terminal Gly of ubiquitin (a 76-residue protein attached to proteins as an intracellular targeting signal).. Deubiquitinating enzyme (DUB) that controls levels of cellular ubiquitin through processing of ubiquitin precursors and ubiquitinated proteins. Thiol protease that recognizes and hydrolyzes a peptide bond at the C-terminal glycine of either ubiquitin or RUB1. Preferentially cleaves ubiquitin from peptides and small adducts. This Saccharomyces cerevisiae (strain ATCC 204508 / S288c) (Baker's yeast) protein is Ubiquitin carboxyl-terminal hydrolase YUH1 (YUH1).